We begin with the raw amino-acid sequence, 203 residues long: dITP/XTP pyrophosphatase (203 aa).

Ser-9–Lys-14 is a substrate binding site. Glu-42 and Asp-72 together coordinate Mg(2+). Asp-72 (proton acceptor) is an active-site residue. Residues Ser-73, Phe-161–Asp-164, Lys-184, and His-189–Arg-190 contribute to the substrate site.

It belongs to the HAM1 NTPase family. As to quaternary structure, homodimer. Mg(2+) serves as cofactor.

The catalysed reaction is XTP + H2O = XMP + diphosphate + H(+). The enzyme catalyses dITP + H2O = dIMP + diphosphate + H(+). It carries out the reaction ITP + H2O = IMP + diphosphate + H(+). Functionally, pyrophosphatase that catalyzes the hydrolysis of nucleoside triphosphates to their monophosphate derivatives, with a high preference for the non-canonical purine nucleotides XTP (xanthosine triphosphate), dITP (deoxyinosine triphosphate) and ITP. Seems to function as a house-cleaning enzyme that removes non-canonical purine nucleotides from the nucleotide pool, thus preventing their incorporation into DNA/RNA and avoiding chromosomal lesions. This chain is dITP/XTP pyrophosphatase, found in Acidobacterium capsulatum (strain ATCC 51196 / DSM 11244 / BCRC 80197 / JCM 7670 / NBRC 15755 / NCIMB 13165 / 161).